A 42-amino-acid chain; its full sequence is Protein YkgS (42 aa).

The protein is Protein YkgS (ykgS) of Escherichia coli (strain K12).